We begin with the raw amino-acid sequence, 405 residues long: MTQSQYRPGPDANGLFGSFGGRYVAETLMPLVLDLAREYEAAKADPKFLEELAYFQRDYIGRPNPLYFAERLTEHCGGAKIFFKREELNHTGAHKVNNCIGQVLLAKRMGKKRLIAETGAGMHGVATATVAARFGLPCVIYMGATDIERQQANVFRMKLLGAEIVPVTAGTGTLKDAMNEALRDWVTNVEDTFYLIGTVAGPHPYPAMVRDFQSIIGKETRAQLQEKEGRLPDSLVACVGGGSNAMGLFHEFLEEPSVQIIGVEAGGHGVHTDKHAASLNGGVPGVLHGNRTYLLQDQDGQITDAHSISAGLDYPGIGPEHAYLHEVKRVEYVSITDDEALDAFHATCRLEGIIPALESSHALAEAIKRAPKLPKDHLMVVCLSGRGDKDMQTVMNHMAAQEKQA.

Position 95 is an N6-(pyridoxal phosphate)lysine (Lys-95).

This sequence belongs to the TrpB family. In terms of assembly, tetramer of two alpha and two beta chains. Pyridoxal 5'-phosphate is required as a cofactor.

The enzyme catalyses (1S,2R)-1-C-(indol-3-yl)glycerol 3-phosphate + L-serine = D-glyceraldehyde 3-phosphate + L-tryptophan + H2O. It functions in the pathway amino-acid biosynthesis; L-tryptophan biosynthesis; L-tryptophan from chorismate: step 5/5. In terms of biological role, the beta subunit is responsible for the synthesis of L-tryptophan from indole and L-serine. The sequence is that of Tryptophan synthase beta chain from Pseudomonas putida (strain ATCC 47054 / DSM 6125 / CFBP 8728 / NCIMB 11950 / KT2440).